Consider the following 129-residue polypeptide: L-ectoine synthase (129 aa).

This sequence belongs to the ectoine synthase family.

The catalysed reaction is (2S)-4-acetamido-2-aminobutanoate = L-ectoine + H2O. It functions in the pathway amine and polyamine biosynthesis; ectoine biosynthesis; L-ectoine from L-aspartate 4-semialdehyde: step 3/3. Its function is as follows. Catalyzes the circularization of gamma-N-acetyl-alpha,gamma-diaminobutyric acid (ADABA) to ectoine (1,4,5,6-tetrahydro-2-methyl-4-pyrimidine carboxylic acid), which is an excellent osmoprotectant. The protein is L-ectoine synthase of Marinomonas sp. (strain MWYL1).